Reading from the N-terminus, the 481-residue chain is CUGBP Elav-like family member 6 (481 aa).

Low complexity predominate over residues 1–12 (MAAAPGGSAQPA). The segment at 1-34 (MAAAPGGSAQPAGPGPRLGFSTADSGVGMSGLNP) is disordered. 3 consecutive RRM domains span residues 46 to 127 (IKLF…PAAS), 134 to 214 (RKLF…LADT), and 396 to 474 (CNLF…LKRP).

It belongs to the CELF/BRUNOL family. In terms of tissue distribution, expressed mainly in kidney, brain and testis and present in other tissues albeit at lower levels. Also expressed in fetal kidney.

The protein localises to the nucleus. Its subcellular location is the cytoplasm. Its function is as follows. RNA-binding protein implicated in the regulation of pre-mRNA alternative splicing. Mediates exon inclusion and/or exclusion in pre-mRNA that are subject to tissue-specific and developmentally regulated alternative splicing. Specifically activates exon 5 inclusion of TNNT2 in a muscle-specific splicing enhancer (MSE)-dependent manner. Promotes also exon exclusion of INSR pre-mRNA. The sequence is that of CUGBP Elav-like family member 6 (CELF6) from Homo sapiens (Human).